The primary structure comprises 190 residues: Potassium-transporting ATPase KdpC subunit (190 aa).

A helical membrane pass occupies residues 10–30 (TFLFLLLITGGVYPLLTTALG).

Belongs to the KdpC family. In terms of assembly, the system is composed of three essential subunits: KdpA, KdpB and KdpC.

It localises to the cell inner membrane. Its function is as follows. Part of the high-affinity ATP-driven potassium transport (or Kdp) system, which catalyzes the hydrolysis of ATP coupled with the electrogenic transport of potassium into the cytoplasm. This subunit acts as a catalytic chaperone that increases the ATP-binding affinity of the ATP-hydrolyzing subunit KdpB by the formation of a transient KdpB/KdpC/ATP ternary complex. The polypeptide is Potassium-transporting ATPase KdpC subunit (Escherichia coli O6:H1 (strain CFT073 / ATCC 700928 / UPEC)).